Here is a 178-residue protein sequence, read N- to C-terminus: Cytidylate kinase (178 aa).

7–15 contacts ATP; the sequence is GLPGTGTTT.

Belongs to the cytidylate kinase family. Type 2 subfamily.

The protein localises to the cytoplasm. The catalysed reaction is CMP + ATP = CDP + ADP. It carries out the reaction dCMP + ATP = dCDP + ADP. This chain is Cytidylate kinase, found in Methanococcus aeolicus (strain ATCC BAA-1280 / DSM 17508 / OCM 812 / Nankai-3).